The chain runs to 434 residues: Enolase (434 aa).

Q163 is a binding site for (2R)-2-phosphoglycerate. Catalysis depends on E205, which acts as the Proton donor. Positions 242, 289, and 316 each coordinate Mg(2+). 4 residues coordinate (2R)-2-phosphoglycerate: K341, R370, S371, and K392. K341 serves as the catalytic Proton acceptor.

Belongs to the enolase family. The cofactor is Mg(2+).

The protein resides in the cytoplasm. The protein localises to the secreted. It localises to the cell surface. The catalysed reaction is (2R)-2-phosphoglycerate = phosphoenolpyruvate + H2O. It participates in carbohydrate degradation; glycolysis; pyruvate from D-glyceraldehyde 3-phosphate: step 4/5. In terms of biological role, catalyzes the reversible conversion of 2-phosphoglycerate (2-PG) into phosphoenolpyruvate (PEP). It is essential for the degradation of carbohydrates via glycolysis. The polypeptide is Enolase (Lacticaseibacillus paracasei (strain ATCC 334 / BCRC 17002 / CCUG 31169 / CIP 107868 / KCTC 3260 / NRRL B-441) (Lactobacillus paracasei)).